A 615-amino-acid polypeptide reads, in one-letter code: Medium-chain acyl-CoA ligase ACSF2, mitochondrial (615 aa).

Residues 1-41 (MAVYHGMLRFGRLCIASLGARGPRTLLSRPRPNSKLQSVRA) constitute a mitochondrion transit peptide. At K179 the chain carries N6-acetyllysine. K182 carries the post-translational modification N6-acetyllysine; alternate. The residue at position 182 (K182) is an N6-succinyllysine; alternate. Residue K199 is modified to N6-acetyllysine. 263–271 (TSGTTGNPK) contributes to the ATP binding site. 2 positions are modified to N6-acetyllysine: K340 and K398. K478 is modified (N6-succinyllysine). Residues D493 and R508 each coordinate ATP. K510 carries the N6-acetyllysine modification. N6-acetyllysine; alternate is present on residues K544 and K570. N6-succinyllysine; alternate is present on residues K544 and K570. Residue K599 participates in ATP binding. N6-succinyllysine is present on K599.

This sequence belongs to the ATP-dependent AMP-binding enzyme family.

The protein resides in the mitochondrion. It carries out the reaction a medium-chain fatty acid + ATP + CoA = a medium-chain fatty acyl-CoA + AMP + diphosphate. The catalysed reaction is octanoate + ATP + CoA = octanoyl-CoA + AMP + diphosphate. Its function is as follows. Acyl-CoA synthases catalyze the initial reaction in fatty acid metabolism, by forming a thioester with CoA. Has some preference toward medium-chain substrates. Plays a role in adipocyte differentiation. The chain is Medium-chain acyl-CoA ligase ACSF2, mitochondrial from Mus musculus (Mouse).